Here is a 330-residue protein sequence, read N- to C-terminus: uncharacterized protein (330 aa).

Residues 96–256 enclose the JmjC domain; the sequence is AALEFDFTDL…LMLAALRKKL (161 aa). Fe cation is bound by residues H145, D147, and H224.

It belongs to the ROX family. The cofactor is Fe(2+).

This is an uncharacterized protein from Bacillus subtilis (strain 168).